The chain runs to 138 residues: Transcription antitermination protein NusB (138 aa).

Belongs to the NusB family.

Functionally, involved in transcription antitermination. Required for transcription of ribosomal RNA (rRNA) genes. Binds specifically to the boxA antiterminator sequence of the ribosomal RNA (rrn) operons. The protein is Transcription antitermination protein NusB of Yersinia pseudotuberculosis serotype O:1b (strain IP 31758).